Consider the following 307-residue polypeptide: Dof zinc finger protein DOF5.4 (307 aa).

A Dof-type zinc finger spans residues 51–105; it reads LKCPRCNSLNTKFCYYNNYNLSQPRHFCKNCRRYWTKGGVLRNVPVGGGCRKAKR. Cysteine 53, cysteine 56, cysteine 78, and cysteine 81 together coordinate Zn(2+). Positions 96–147 are disordered; sequence VGGGCRKAKRSKTKQVPSSSSADKPTTTQDDHHVEEKSSTGSHSSSESSSLT. A compositionally biased stretch (polar residues) spans 109–123; sequence KQVPSSSSADKPTTT. The segment covering 124–133 has biased composition (basic and acidic residues); it reads QDDHHVEEKS. Residues 134-147 are compositionally biased toward low complexity; it reads STGSHSSSESSSLT.

The protein resides in the nucleus. Transcription factor that binds specifically to a 5'-AA[AG]G-3' consensus core sequence. Enhances the DNA binding of OBF transcription factors to OCS elements. The chain is Dof zinc finger protein DOF5.4 (DOF5.4) from Arabidopsis thaliana (Mouse-ear cress).